Here is a 41-residue protein sequence, read N- to C-terminus: Large ribosomal subunit protein bL36 (41 aa).

Belongs to the bacterial ribosomal protein bL36 family.

This is Large ribosomal subunit protein bL36 from Bartonella tribocorum (strain CIP 105476 / IBS 506).